Here is a 116-residue protein sequence, read N- to C-terminus: Large ribosomal subunit protein uL18 (116 aa).

It belongs to the universal ribosomal protein uL18 family. As to quaternary structure, part of the 50S ribosomal subunit; part of the 5S rRNA/L5/L18/L25 subcomplex. Contacts the 5S and 23S rRNAs.

Its function is as follows. This is one of the proteins that bind and probably mediate the attachment of the 5S RNA into the large ribosomal subunit, where it forms part of the central protuberance. The sequence is that of Large ribosomal subunit protein uL18 from Pseudomonas entomophila (strain L48).